Here is a 434-residue protein sequence, read N- to C-terminus: Serine hydroxymethyltransferase 1 (434 aa).

Residues Leu136 and 140-142 each bind (6S)-5,6,7,8-tetrahydrofolate; that span reads GHL. Residue Lys245 is modified to N6-(pyridoxal phosphate)lysine.

The protein belongs to the SHMT family. In terms of assembly, homodimer. The cofactor is pyridoxal 5'-phosphate.

It localises to the cytoplasm. The catalysed reaction is (6R)-5,10-methylene-5,6,7,8-tetrahydrofolate + glycine + H2O = (6S)-5,6,7,8-tetrahydrofolate + L-serine. It functions in the pathway one-carbon metabolism; tetrahydrofolate interconversion. The protein operates within amino-acid biosynthesis; glycine biosynthesis; glycine from L-serine: step 1/1. In terms of biological role, catalyzes the reversible interconversion of serine and glycine with tetrahydrofolate (THF) serving as the one-carbon carrier. This reaction serves as the major source of one-carbon groups required for the biosynthesis of purines, thymidylate, methionine, and other important biomolecules. Also exhibits THF-independent aldolase activity toward beta-hydroxyamino acids, producing glycine and aldehydes, via a retro-aldol mechanism. This Rhodospirillum rubrum (strain ATCC 11170 / ATH 1.1.1 / DSM 467 / LMG 4362 / NCIMB 8255 / S1) protein is Serine hydroxymethyltransferase 1.